The primary structure comprises 327 residues: NF-kappa-B inhibitor delta (327 aa).

Positions 1–40 (MEDSLDTRLYPEPSLSQVGSWRVSSLPSGSPQLPSPTGPS) are disordered. The segment covering 14 to 23 (SLSQVGSWRV) has biased composition (polar residues). ANK repeat units follow at residues 62-97 (EGDT…IREH), 98-127 (KGKT…EPNA), 131-160 (QGRS…QVDL), 166-215 (EGLT…SHTS), 220-250 (SNKT…DLRA), and 257-290 (HGNT…DPTL). A disordered region spans residues 293–327 (LENEQPVHLLRPGPGPEGLRQLLKRSRTAPPGLSS).

It belongs to the NF-kappa-B inhibitor family. In terms of assembly, interacts with NFKB1, RELA and RELB; in the nucleus. As to expression, specifically expressed in spleen and at low levels in thymus. Expressed in a population of antigen-presenting dendritic cells which may act as regulators of systemic inflammatory response.

The protein resides in the nucleus. Functionally, regulates the expression of IL-2, IL-6, and other cytokines through regulation on NF-kappa-B activity. Functions in the regulation of inflammatory responses. Involved in the induction of T helper 17 cells (Th17) differentiation upon recognition of antigen by T cell antigen receptor (TCR). According to PubMed:11931770, it may also regulate TCR-induced negative selection of thymocytes. The polypeptide is NF-kappa-B inhibitor delta (Nfkbid) (Mus musculus (Mouse)).